The following is a 477-amino-acid chain: 3-isopropylmalate dehydratase large subunit (477 aa).

Residues cysteine 347, cysteine 407, and cysteine 410 each coordinate [4Fe-4S] cluster. Residues 418 to 442 (LAPGERSASTSNRNFEGRQGKGGRT) are disordered.

Belongs to the aconitase/IPM isomerase family. LeuC type 1 subfamily. In terms of assembly, heterodimer of LeuC and LeuD. Requires [4Fe-4S] cluster as cofactor.

It carries out the reaction (2R,3S)-3-isopropylmalate = (2S)-2-isopropylmalate. The protein operates within amino-acid biosynthesis; L-leucine biosynthesis; L-leucine from 3-methyl-2-oxobutanoate: step 2/4. Catalyzes the isomerization between 2-isopropylmalate and 3-isopropylmalate, via the formation of 2-isopropylmaleate. In Streptomyces avermitilis (strain ATCC 31267 / DSM 46492 / JCM 5070 / NBRC 14893 / NCIMB 12804 / NRRL 8165 / MA-4680), this protein is 3-isopropylmalate dehydratase large subunit.